Reading from the N-terminus, the 95-residue chain is Selenoprotein K (95 aa).

A helical membrane pass occupies residues 20-42; the sequence is LSFLTDMFWGITDFVVMFFQSII. Residues 47-95 are disordered; that stretch reads TRRGCQNSSSSTRYDDGRGPPGHPRRMGRINHGSGPSAPPMAGGGGUGR. A non-standard amino acid (selenocysteine) is located at residue selenocysteine 93.

Belongs to the selenoprotein K family.

It localises to the endoplasmic reticulum membrane. Its subcellular location is the cell membrane. Its function is as follows. Required for Ca(2+) flux in immune cells and plays a role in T-cell proliferation and in T-cell and neutrophil migration. Involved in endoplasmic reticulum-associated degradation (ERAD) of soluble glycosylated proteins. Required for cell surface expression of CD36 and involved in macrophage uptake of low-density lipoprotein and in foam cell formation. Required for palmitoylation. This is Selenoprotein K (selenok) from Xenopus laevis (African clawed frog).